The sequence spans 505 residues: ATP synthase subunit alpha, chloroplastic (505 aa).

170–177 (GDRQTGKT) provides a ligand contact to ATP.

This sequence belongs to the ATPase alpha/beta chains family. In terms of assembly, F-type ATPases have 2 components, CF(1) - the catalytic core - and CF(0) - the membrane proton channel. CF(1) has five subunits: alpha(3), beta(3), gamma(1), delta(1), epsilon(1). CF(0) has four main subunits: a, b, b' and c.

The protein resides in the plastid. It localises to the chloroplast thylakoid membrane. It catalyses the reaction ATP + H2O + 4 H(+)(in) = ADP + phosphate + 5 H(+)(out). Its function is as follows. Produces ATP from ADP in the presence of a proton gradient across the membrane. The alpha chain is a regulatory subunit. The sequence is that of ATP synthase subunit alpha, chloroplastic from Oenothera parviflora (Small-flowered evening primrose).